Here is a 256-residue protein sequence, read N- to C-terminus: Non-structural protein 1 (256 aa).

Its subcellular location is the host cytoplasm. It localises to the host perinuclear region. In terms of biological role, plays a role in inhibition of the host innate immune system by counteracting the type I interferon signaling. This is Non-structural protein 1 from Infectious salmon anemia virus (isolate Atlantic salmon/Norway/810/9/99) (ISAV).